We begin with the raw amino-acid sequence, 364 residues long: MKLHEYEAKNIFKKYGIPVPESFLVSKEDDLNSINVDKEVVLKAQVLVGGRGKAGGILFASNKEEFIKKAEELFNKEVKGEKVEKILVEEKLPIEKEYYVSIIIDRDAKKPLIIFSTEGGVDIEEVAEKNPEKIIKYHIDVRKPFLPYIARWIVKEAKLPSNEIGKVADVIYKLYKIFKELDATMVEINPLVITKDGNVYAADAVLHLDDDAAFRHNYEEFEEYKNKEKLPFAYVELDGDVAVIGNGAGLTLASMDIINNLGRKPACFLDIGGGADAETVKLALRKVLENKNVKGIFINILGGITRCDEVAKGIVEVLKEHPNVKFAVRMMGTNEEIGRKILEEHGIPYETSMEEAGRKLIEQL.

In terms of domain architecture, ATP-grasp spans 9–229; that stretch reads KNIFKKYGIP…EFEEYKNKEK (221 aa). Residues lysine 43, 50–52, glutamate 89, leucine 92, and glutamate 97 each bind ATP; that span reads GRG. 2 residues coordinate Mg(2+): asparagine 189 and aspartate 203. Substrate contacts are provided by residues asparagine 246 and 303-305; that span reads GIT.

It belongs to the succinate/malate CoA ligase beta subunit family. As to quaternary structure, heterotetramer of two alpha and two beta subunits. Mg(2+) serves as cofactor.

The enzyme catalyses succinate + ATP + CoA = succinyl-CoA + ADP + phosphate. It catalyses the reaction GTP + succinate + CoA = succinyl-CoA + GDP + phosphate. It participates in carbohydrate metabolism; tricarboxylic acid cycle; succinate from succinyl-CoA (ligase route): step 1/1. Succinyl-CoA synthetase functions in the citric acid cycle (TCA), coupling the hydrolysis of succinyl-CoA to the synthesis of either ATP or GTP and thus represents the only step of substrate-level phosphorylation in the TCA. The beta subunit provides nucleotide specificity of the enzyme and binds the substrate succinate, while the binding sites for coenzyme A and phosphate are found in the alpha subunit. The sequence is that of Succinate--CoA ligase [ADP-forming] subunit beta from Methanocaldococcus jannaschii (strain ATCC 43067 / DSM 2661 / JAL-1 / JCM 10045 / NBRC 100440) (Methanococcus jannaschii).